The following is a 363-amino-acid chain: Chorismate synthase (363 aa).

2 residues coordinate NADP(+): Arg-48 and Arg-54. FMN is bound by residues 125–127, 237–238, Gly-277, 292–296, and Arg-318; these read RSS, NA, and KPTSS.

The protein belongs to the chorismate synthase family. As to quaternary structure, homotetramer. FMNH2 is required as a cofactor.

The catalysed reaction is 5-O-(1-carboxyvinyl)-3-phosphoshikimate = chorismate + phosphate. The protein operates within metabolic intermediate biosynthesis; chorismate biosynthesis; chorismate from D-erythrose 4-phosphate and phosphoenolpyruvate: step 7/7. Its function is as follows. Catalyzes the anti-1,4-elimination of the C-3 phosphate and the C-6 proR hydrogen from 5-enolpyruvylshikimate-3-phosphate (EPSP) to yield chorismate, which is the branch point compound that serves as the starting substrate for the three terminal pathways of aromatic amino acid biosynthesis. This reaction introduces a second double bond into the aromatic ring system. This chain is Chorismate synthase, found in Stutzerimonas stutzeri (strain A1501) (Pseudomonas stutzeri).